A 365-amino-acid chain; its full sequence is Carboxynorspermidine/carboxyspermidine decarboxylase (365 aa).

Lys37 carries the post-translational modification N6-(pyridoxal phosphate)lysine. Positions 233 and 269 each coordinate substrate.

The protein belongs to the Orn/Lys/Arg decarboxylase class-II family. NspC subfamily. Homodimer. It depends on pyridoxal 5'-phosphate as a cofactor.

It is found in the cytoplasm. It catalyses the reaction carboxynorspermidine + H(+) = norspermidine + CO2. The enzyme catalyses carboxyspermidine + H(+) = spermidine + CO2. Its function is as follows. Catalyzes the decarboxylation of carboxynorspermidine and carboxyspermidine. The chain is Carboxynorspermidine/carboxyspermidine decarboxylase from Herminiimonas arsenicoxydans.